The following is a 133-amino-acid chain: Profilin-3 (133 aa).

The protein belongs to the profilin family. As to quaternary structure, occurs in many kinds of cells as a complex with monomeric actin in a 1:1 ratio.

The protein resides in the cytoplasm. Its subcellular location is the cytoskeleton. Its function is as follows. Binds to actin and affects the structure of the cytoskeleton. At high concentrations, profilin prevents the polymerization of actin, whereas it enhances it at low concentrations. By binding to PIP2, it inhibits the formation of IP3 and DG. The protein is Profilin-3 (PRO3) of Nicotiana tabacum (Common tobacco).